The following is a 416-amino-acid chain: Enterobactin exporter EntS (416 aa).

Topologically, residues 1 to 21 (MNKQSWLLNLSLLKTHPAFRA) are cytoplasmic. Residues 22-42 (VFLARFISIVSLGLLGVAVPV) form a helical membrane-spanning segment. Residues 43 to 55 (QIQMMTHSTWQVG) lie on the Periplasmic side of the membrane. Residues 56–76 (LSVTLTGGAMFVGLMVGGVLA) traverse the membrane as a helical segment. The Cytoplasmic portion of the chain corresponds to 77-83 (DRYERKK). Residues 84–104 (VILLARGTCGIGFIGLCLNAL) traverse the membrane as a helical segment. The Periplasmic portion of the chain corresponds to 105 to 109 (LPEPS). Residues 110–130 (LLAIYLLGLWDGFFASLGVTA) form a helical membrane-spanning segment. Residues 131 to 156 (LLAATPALVGRENLMQAGAITMLTVR) are Cytoplasmic-facing. The chain crosses the membrane as a helical span at residues 157–177 (LGSVISPMIGGLLLATGGVAW). Asparagine 178 is a topological domain (periplasmic). Residues 179–199 (YGLAAAGTFITLLPLLSLPAL) traverse the membrane as a helical segment. The Cytoplasmic portion of the chain corresponds to 200–218 (PPPPQPREHPLKSLLAGFR). The chain crosses the membrane as a helical span at residues 219 to 239 (FLLASPLVGGIALLGGLLTMA). The Periplasmic portion of the chain corresponds to 240–256 (SAVRVLYPALADNWQMS). A helical transmembrane segment spans residues 257–277 (AAQIGFLYAAIPLGAAIGALT). The Cytoplasmic portion of the chain corresponds to 278–287 (SGKLAHSARP). The helical transmembrane segment at 288 to 307 (GLLMLLSTLGSFLAIGLFGL) threads the bilayer. Residues 308–313 (MPMWIL) lie on the Periplasmic side of the membrane. A helical membrane pass occupies residues 314–336 (GVVCLALFGWLSAVSSLLQYTML). The Cytoplasmic segment spans residues 337-356 (QTQTPEAMLGRINGLWTAQN). A helical membrane pass occupies residues 357–377 (VTGDAIGAALLGGLGAMMTPV). Position 378 (alanine 378) is a topological domain, periplasmic. The helical transmembrane segment at 379–399 (SASASGFGLLIIGVLLLLVLV) threads the bilayer. Over 400–416 (ELRRFRQTPPQMTASDS) the chain is Cytoplasmic.

This sequence belongs to the major facilitator superfamily. EntS (TC 2.A.1.38) family.

Its subcellular location is the cell inner membrane. Its function is as follows. Component of an export pathway for enterobactin. This Escherichia coli O7:K1 (strain IAI39 / ExPEC) protein is Enterobactin exporter EntS.